A 544-amino-acid polypeptide reads, in one-letter code: Chaperonin GroEL (544 aa).

ATP is bound by residues 30–33, Lys-51, 87–91, Gly-415, 481–483, and Asp-497; these read TLGP, DGTTT, and DAL.

Belongs to the chaperonin (HSP60) family. As to quaternary structure, forms a cylinder of 14 subunits composed of two heptameric rings stacked back-to-back. Interacts with the co-chaperonin GroES.

Its subcellular location is the cytoplasm. The catalysed reaction is ATP + H2O + a folded polypeptide = ADP + phosphate + an unfolded polypeptide.. Functionally, together with its co-chaperonin GroES, plays an essential role in assisting protein folding. The GroEL-GroES system forms a nano-cage that allows encapsulation of the non-native substrate proteins and provides a physical environment optimized to promote and accelerate protein folding. The sequence is that of Chaperonin GroEL from Chlamydia trachomatis serovar D (strain ATCC VR-885 / DSM 19411 / UW-3/Cx).